Consider the following 129-residue polypeptide: Cocaine- and amphetamine-regulated transcript protein (129 aa).

Positions 1-27 (MESSRLRLLPLLGAALLLLLPLLGARA) are cleaved as a signal peptide. Y41 bears the Phosphotyrosine mark. S48 carries the phosphoserine modification. Intrachain disulfides connect C95–C113, C101–C121, and C115–C128.

It belongs to the CART family.

Its subcellular location is the secreted. Functionally, satiety factor closely associated with the actions of leptin and neuropeptide y; this anorectic peptide inhibits both normal and starvation-induced feeding and completely blocks the feeding response induced by neuropeptide Y and regulated by leptin in the hypothalamus. This Mus musculus (Mouse) protein is Cocaine- and amphetamine-regulated transcript protein (Cartpt).